The primary structure comprises 465 residues: Dihydrolipoyllysine-residue acetyltransferase component 5 of pyruvate dehydrogenase complex, chloroplastic (465 aa).

A chloroplast-targeting transit peptide spans 1–31; the sequence is MSRLLQTPFLPSVSLPTKTRSSVTGFRVKPR. The Lipoyl-binding domain occupies 39 to 114; sequence IREIFMPALS…PVGSAIALLA (76 aa). Lysine 80 is subject to N6-lipoyllysine. The segment at 123–148 is disordered; the sequence is AKAKASGGGGGGDSKAPPASPPTAAV. Residues 136 to 148 are compositionally biased toward low complexity; sequence SKAPPASPPTAAV. In terms of domain architecture, Peripheral subunit-binding (PSBD) spans 184–221; it reads VASPYAKKLAKELKVELAGLVGSGPMGRIVAKDVEAVA. Histidine 438 is an active-site residue.

This sequence belongs to the 2-oxoacid dehydrogenase family. (R)-lipoate serves as cofactor.

The protein resides in the plastid. The protein localises to the chloroplast stroma. The enzyme catalyses N(6)-[(R)-dihydrolipoyl]-L-lysyl-[protein] + acetyl-CoA = N(6)-[(R)-S(8)-acetyldihydrolipoyl]-L-lysyl-[protein] + CoA. The pyruvate dehydrogenase complex catalyzes the overall conversion of pyruvate to acetyl-CoA and CO(2). It contains multiple copies of three enzymatic components: pyruvate dehydrogenase (E1), dihydrolipoamide acetyltransferase (E2) and lipoamide dehydrogenase (E3). In Arabidopsis thaliana (Mouse-ear cress), this protein is Dihydrolipoyllysine-residue acetyltransferase component 5 of pyruvate dehydrogenase complex, chloroplastic (EMB3003).